A 286-amino-acid polypeptide reads, in one-letter code: Pantothenate synthetase (286 aa).

30–37 (MGNLHAGH) is an ATP binding site. The active-site Proton donor is H37. (R)-pantoate is bound at residue Q61. Q61 provides a ligand contact to beta-alanine. Residue 149–152 (GQKD) participates in ATP binding. Q155 is a (R)-pantoate binding site. Residues V178 and 186–189 (LSSR) each bind ATP.

Belongs to the pantothenate synthetase family. Homodimer.

Its subcellular location is the cytoplasm. It carries out the reaction (R)-pantoate + beta-alanine + ATP = (R)-pantothenate + AMP + diphosphate + H(+). It participates in cofactor biosynthesis; (R)-pantothenate biosynthesis; (R)-pantothenate from (R)-pantoate and beta-alanine: step 1/1. Functionally, catalyzes the condensation of pantoate with beta-alanine in an ATP-dependent reaction via a pantoyl-adenylate intermediate. The protein is Pantothenate synthetase of Stutzerimonas stutzeri (strain A1501) (Pseudomonas stutzeri).